The primary structure comprises 246 residues: Adenosine 5'-phosphosulfate reductase (246 aa).

The [4Fe-4S] cluster site is built by Cys131, Cys132, Cys214, and Cys217. The active-site Nucleophile; cysteine thiosulfonate intermediate is the Cys242.

Belongs to the PAPS reductase family. CysH subfamily. [4Fe-4S] cluster serves as cofactor.

The protein localises to the cytoplasm. It carries out the reaction [thioredoxin]-disulfide + sulfite + AMP + 2 H(+) = adenosine 5'-phosphosulfate + [thioredoxin]-dithiol. Its pathway is sulfur metabolism; hydrogen sulfide biosynthesis; sulfite from sulfate. Functionally, catalyzes the formation of sulfite from adenosine 5'-phosphosulfate (APS) using thioredoxin as an electron donor. In Neisseria meningitidis serogroup B (strain ATCC BAA-335 / MC58), this protein is Adenosine 5'-phosphosulfate reductase.